Reading from the N-terminus, the 357-residue chain is BLOC-1-related complex subunit 6 (357 aa).

The segment at 20–196 (HQALVFGGGP…SGAGGGRRAT (177 aa)) is disordered. The segment covering 90–99 (GAGSRRGAPG) has biased composition (low complexity). A compositionally biased stretch (acidic residues) spans 138-149 (EQQEEEDNDEEA). Low complexity predominate over residues 150–162 (AAGSRAGRSFSSR). The residue at position 168 (serine 168) is a Phosphoserine. Position 196 is a phosphothreonine (threonine 196). Serine 199 is subject to Phosphoserine. Positions 227–256 (LSGAPPPPPSAPARPCPAPAPTPTPAIPPI) are disordered. Residues 230–256 (APPPPPSAPARPCPAPAPTPTPAIPPI) show a composition bias toward pro residues.

Belongs to the BORCS6 family. As to quaternary structure, component of the BLOC-one-related complex (BORC) which is composed of BLOC1S1, BLOC1S2, BORCS5, BORCS6, BORCS7, BORCS8, KXD1 and SNAPIN.

Its subcellular location is the lysosome membrane. Its function is as follows. As part of the BORC complex may play a role in lysosomes movement and localization at the cell periphery. Associated with the cytosolic face of lysosomes, the BORC complex may recruit ARL8B and couple lysosomes to microtubule plus-end-directed kinesin motor. The sequence is that of BLOC-1-related complex subunit 6 from Homo sapiens (Human).